We begin with the raw amino-acid sequence, 801 residues long: Na(+)/H(+) antiporter subunit A1 (801 aa).

21 helical membrane-spanning segments follow: residues 4–25, 30–49, 79–101, 108–127, 131–153, 166–188, 208–230, 243–265, 270–289, 302–324, 339–361, 373–395, 429–451, 472–494, 526–548, 589–611, 621–641, 646–668, 672–694, 707–729, and 767–784; these read LHIA…YRFF, LGWF…LTLI, LGLL…SIGY, LGNF…GVVL, VIIL…SFWR, LIIT…IPTQ, FIFA…PFYI, SAYL…MTPI, QGWV…WASL, AFST…ISYH, AAIF…TGAV, LGGL…LSMA, YLFP…KFIM, ILML…FPGI, AFLS…SYWV, NNLV…SVPF, IRIF…LILF, LFSI…FFKA, ALTQ…YHLP, LTNA…IAYG, and LFES…YTMI.

The protein belongs to the CPA3 antiporters (TC 2.A.63) subunit A family. In terms of assembly, may form a heterooligomeric complex that consists of seven subunits: mnhA1, mnhB1, mnhC1, mnhD1, mnhE1, mnhF1 and mnhG1.

The protein resides in the cell membrane. With respect to regulation, na(+) extrusion is completely inhibited by the H(+) conductor carbonyl cyanide m-chlorophenylhydrazone (CCCP). Mnh complex is a Na(+)Li(+)/H(+) antiporter involved in Na(+) and/or Li(+) excretion. Na(+)/H(+) antiport consumes a transmembrane electrical potential, and is thus inferred to be electrogenic. Does not transport K(+), Ca(2+) or Mg(2+). This Staphylococcus aureus protein is Na(+)/H(+) antiporter subunit A1 (mnhA1).